The following is a 127-amino-acid chain: Large ribosomal subunit protein bL19 (127 aa).

This sequence belongs to the bacterial ribosomal protein bL19 family.

In terms of biological role, this protein is located at the 30S-50S ribosomal subunit interface and may play a role in the structure and function of the aminoacyl-tRNA binding site. The sequence is that of Large ribosomal subunit protein bL19 from Myxococcus xanthus (strain DK1622).